We begin with the raw amino-acid sequence, 649 residues long: Lipoteichoic acid synthase 2 (649 aa).

Residues 1-9 (MKTFIKERG) lie on the Cytoplasmic side of the membrane. Residues 10–30 (LAFFLIAVVLLWIKTYVGYVL) form a helical membrane-spanning segment. At 31–42 (NFNLGIDNTIQK) the chain is on the extracellular side. A helical transmembrane segment spans residues 43–63 (ILLFVNPLSSSLFFLGFGLLF). The Cytoplasmic portion of the chain corresponds to 64–69 (KKKLQQ). A helical transmembrane segment spans residues 70–90 (TAIIVIHFLMSFLLYANIVYY). At 91–118 (RFFNDFITIPVIMQAKTNGGQLGDSAFS) the chain is on the extracellular side. A helical membrane pass occupies residues 119–139 (LMRPTDAFYFIDTIILIILAI). Topologically, residues 140–151 (KVNKPAETSSKK) are cytoplasmic. Residues 152-172 (SFRIIFASSILVFLINLAVAE) traverse the membrane as a helical segment. Residues 173-649 (SDRPELLTRS…SETSKDNEDK (477 aa)) lie on the Extracellular side of the membrane. The Mn(2+) site is built by E253 and T297. T297 is a catalytic residue. H412 serves as a coordination point for substrate. D471 and H472 together coordinate Mn(2+). Positions 622-649 (FKKVNPSDYDYTKHDEDSSETSKDNEDK) are disordered. A compositionally biased stretch (basic and acidic residues) spans 631 to 649 (DYTKHDEDSSETSKDNEDK).

It belongs to the LTA synthase family. Post-translationally, proteolytically cleaved.

It localises to the cell membrane. It is found in the secreted. It participates in cell wall biogenesis; lipoteichoic acid biosynthesis. In terms of biological role, catalyzes the polymerization of lipoteichoic acid (LTA) polyglycerol phosphate, a reaction that presumably uses phosphatidylglycerol (PG) as substrate. In Bacillus subtilis (strain 168), this protein is Lipoteichoic acid synthase 2 (ltaS2).